The chain runs to 1378 residues: DNA-directed RNA polymerase subunit beta' (1378 aa).

Positions 69, 71, 84, and 87 each coordinate Zn(2+). 3 residues coordinate Mg(2+): Asp460, Asp462, and Asp464. 4 residues coordinate Zn(2+): Cys808, Cys882, Cys889, and Cys892.

This sequence belongs to the RNA polymerase beta' chain family. As to quaternary structure, the RNAP catalytic core consists of 2 alpha, 1 beta, 1 beta' and 1 omega subunit. When a sigma factor is associated with the core the holoenzyme is formed, which can initiate transcription. It depends on Mg(2+) as a cofactor. The cofactor is Zn(2+).

It catalyses the reaction RNA(n) + a ribonucleoside 5'-triphosphate = RNA(n+1) + diphosphate. Functionally, DNA-dependent RNA polymerase catalyzes the transcription of DNA into RNA using the four ribonucleoside triphosphates as substrates. In Rickettsia canadensis (strain McKiel), this protein is DNA-directed RNA polymerase subunit beta'.